Reading from the N-terminus, the 206-residue chain is Large ribosomal subunit protein uL13y (206 aa).

This sequence belongs to the universal ribosomal protein uL13 family.

The protein is Large ribosomal subunit protein uL13y (RPL13AB) of Arabidopsis thaliana (Mouse-ear cress).